We begin with the raw amino-acid sequence, 247 residues long: Phosphoribosylaminoimidazole-succinocarboxamide synthase (247 aa).

The protein belongs to the SAICAR synthetase family.

The catalysed reaction is 5-amino-1-(5-phospho-D-ribosyl)imidazole-4-carboxylate + L-aspartate + ATP = (2S)-2-[5-amino-1-(5-phospho-beta-D-ribosyl)imidazole-4-carboxamido]succinate + ADP + phosphate + 2 H(+). It functions in the pathway purine metabolism; IMP biosynthesis via de novo pathway; 5-amino-1-(5-phospho-D-ribosyl)imidazole-4-carboxamide from 5-amino-1-(5-phospho-D-ribosyl)imidazole-4-carboxylate: step 1/2. In Methanopyrus kandleri (strain AV19 / DSM 6324 / JCM 9639 / NBRC 100938), this protein is Phosphoribosylaminoimidazole-succinocarboxamide synthase.